A 270-amino-acid chain; its full sequence is L-cystine-binding protein TcyK (270 aa).

An N-terminal signal peptide occupies residues 1 to 20 (MKTKTAFMAILFSLITVLSA). Residue C21 is the site of N-palmitoyl cysteine attachment. C21 carries the S-diacylglycerol cysteine lipid modification.

It belongs to the bacterial solute-binding protein 3 family. The complex is composed of two ATP-binding proteins (TcyN), two transmembrane proteins (TcyL and TcyM) and two solute-binding proteins (TcyJ and TcyK).

It localises to the cell membrane. In terms of biological role, part of the ABC transporter complex TcyJKLMN involved in L-cystine import. Is also involved in cystathionine, djenkolate, and S-methylcysteine transport. The sequence is that of L-cystine-binding protein TcyK (tcyK) from Bacillus subtilis (strain 168).